The sequence spans 262 residues: Small ribosomal subunit protein eS4 (262 aa).

Positions 42–105 constitute an S4 RNA-binding domain; that stretch reads LPLXVFLRNR…NEHFRLAYDV (64 aa).

It belongs to the eukaryotic ribosomal protein eS4 family.

The chain is Small ribosomal subunit protein eS4 (RPS4) from Candida albicans (Yeast).